We begin with the raw amino-acid sequence, 259 residues long: Imidazole glycerol phosphate synthase subunit HisF (259 aa).

Catalysis depends on residues D11 and D130.

Belongs to the HisA/HisF family. Heterodimer of HisH and HisF.

The protein localises to the cytoplasm. It carries out the reaction 5-[(5-phospho-1-deoxy-D-ribulos-1-ylimino)methylamino]-1-(5-phospho-beta-D-ribosyl)imidazole-4-carboxamide + L-glutamine = D-erythro-1-(imidazol-4-yl)glycerol 3-phosphate + 5-amino-1-(5-phospho-beta-D-ribosyl)imidazole-4-carboxamide + L-glutamate + H(+). It participates in amino-acid biosynthesis; L-histidine biosynthesis; L-histidine from 5-phospho-alpha-D-ribose 1-diphosphate: step 5/9. Functionally, IGPS catalyzes the conversion of PRFAR and glutamine to IGP, AICAR and glutamate. The HisF subunit catalyzes the cyclization activity that produces IGP and AICAR from PRFAR using the ammonia provided by the HisH subunit. This chain is Imidazole glycerol phosphate synthase subunit HisF, found in Chloroflexus aurantiacus (strain ATCC 29366 / DSM 635 / J-10-fl).